A 335-amino-acid polypeptide reads, in one-letter code: Serine/threonine-protein kinase crk1 (335 aa).

A Protein kinase domain is found at 11-292 (YVKERKVGEG…AQQALEHHYF (282 aa)). Residues 17–25 (VGEGTYAVV) and Lys40 each bind ATP. Residue Asp133 is the Proton acceptor of the active site. Ser162 is modified (phosphoserine). Ser165 carries the phosphoserine; by CAK modification. Ser318 bears the Phosphoserine mark.

It belongs to the protein kinase superfamily. CMGC Ser/Thr protein kinase family. CDC2/CDKX subfamily. In terms of assembly, one of the nine subunits forming the core-TFIIH basal transcription factor. Interacts with mcs2 and tfb3.

The protein resides in the cytoplasm. Its subcellular location is the nucleus. It carries out the reaction [DNA-directed RNA polymerase] + ATP = phospho-[DNA-directed RNA polymerase] + ADP + H(+). Protein kinase essential for cell proliferation, where it is required for completion of cytokinesis. Phosphorylates the C-terminal repeat domain (CTD) of RNA polymerase II. The polypeptide is Serine/threonine-protein kinase crk1 (crk1) (Schizosaccharomyces pombe (strain 972 / ATCC 24843) (Fission yeast)).